The chain runs to 213 residues: Cytokinin riboside 5'-monophosphate phosphoribohydrolase LOG2 (213 aa).

Substrate-binding positions include Glu-79, 97-98, 114-120, and Thr-126; these read RK and GYGTFEE.

The protein belongs to the LOG family. In terms of tissue distribution, expressed in roots and shoots. Detected in root hairs.

The protein localises to the cytoplasm. Its subcellular location is the nucleus. The catalysed reaction is N(6)-(dimethylallyl)adenosine 5'-phosphate + H2O = N(6)-dimethylallyladenine + D-ribose 5-phosphate. The enzyme catalyses 9-ribosyl-trans-zeatin 5'-phosphate + H2O = trans-zeatin + D-ribose 5-phosphate. Cytokinin-activating enzyme working in the direct activation pathway. Phosphoribohydrolase that converts inactive cytokinin nucleotides to the biologically active free-base forms. The sequence is that of Cytokinin riboside 5'-monophosphate phosphoribohydrolase LOG2 (LOG2) from Arabidopsis thaliana (Mouse-ear cress).